The following is an 887-amino-acid chain: MAESIRTFSLQWRILSLIIALLVYFPILSGSYFKPFNVSYDHRALIIAGKRRMLVSAGIHYPRATPEMWSDLIAKSKEGGADVVQTYVFWNGHEPVKGQYNFEGRYDLVKFVKLIGSSGLYLHLRIGPYVCAEWNFGGFPVWLRDIPGIEFRTDNEPFKKEMQKFVTKIVDLMREAKLFCWQGGPIIMLQIENEYGDVEKSYGQKGKDYVKWAASMALGLGAGVPWVMCKQTDAPENIIDACNGYYCDGFKPNSRTKPVLWTEDWDGWYTKWGGSLPHRPAEDLAFAVARFYQRGGSFQNYYMYFGGTNFGRTSGGPFYITSYDYDAPLDEYGLRSEPKWGHLKDLHAAIKLCEPALVAADAPQYRKLGSKQEAHIYHGDGETGGKVCAAFLANIDEHKSAHVKFNGQSYTLPPWSVSILPDCRHVAFNTAKVGAQTSVKTVESARPSLGSMSILQKVVRQDNVSYISKSWMALKEPIGIWGENNFTFQGLLEHLNVTKDRSDYLWHKTRISVSEDDISFWKKNGPNSTVSIDSMRDVLRVFVNKQLAGSIVGHWVKAVQPVRFIQGNNDLLLLTQTVGLQNYGAFLEKDGAGFRGKAKLTGFKNGDLDLSKSSWTYQVGLKGEADKIYTVEHNEKAEWSTLETDASPSIFMWYKTYFDPPAGTDPVVLNLESMGRGQAWVNGQHIGRYWNIISQKDGCDRTCDYRGAYNSDKCTTNCGKPTQTRYHVPRSWLKPSSNLLVLFEETGGNPFKISVKTVTAGILCGQVSESHYPPLRKWSTPDYINGTMSINSVAPEVHLHCEDGHVISSIEFASYGTPRGSCDGFSIGKCHASNSLSIVSEACKGRNSCFIEVSNTAFISDPCSGTLKTLAVMSRCSPSQNMSDLSF.

An N-terminal signal peptide occupies residues 1–30; the sequence is MAESIRTFSLQWRILSLIIALLVYFPILSG. N-linked (GlcNAc...) asparagine glycosylation occurs at Asn37. The Proton donor role is filled by Glu194. Glu263 (nucleophile) is an active-site residue. Asn463, Asn485, Asn496, Asn527, and Asn785 each carry an N-linked (GlcNAc...) asparagine glycan. The region spanning 791–877 is the SUEL-type lectin domain; the sequence is NSVAPEVHLH…KTLAVMSRCS (87 aa). An N-linked (GlcNAc...) asparagine glycan is attached at Asn881.

This sequence belongs to the glycosyl hydrolase 35 family. In terms of tissue distribution, ubiquitous, with higher expression levels in siliques.

It localises to the secreted. Its subcellular location is the extracellular space. It is found in the apoplast. It catalyses the reaction Hydrolysis of terminal non-reducing beta-D-galactose residues in beta-D-galactosides.. The protein is Beta-galactosidase 9 (BGAL9) of Arabidopsis thaliana (Mouse-ear cress).